Here is a 153-residue protein sequence, read N- to C-terminus: 6,7-dimethyl-8-ribityllumazine synthase 1 (153 aa).

5-amino-6-(D-ribitylamino)uracil-binding positions include F16, 50–52 (AYE), and 74–76 (CVI). 79-80 (ET) contributes to the (2S)-2-hydroxy-3-oxobutyl phosphate binding site. The active-site Proton donor is H82. F107 is a 5-amino-6-(D-ribitylamino)uracil binding site. Residue R121 participates in (2S)-2-hydroxy-3-oxobutyl phosphate binding.

The protein belongs to the DMRL synthase family.

It carries out the reaction (2S)-2-hydroxy-3-oxobutyl phosphate + 5-amino-6-(D-ribitylamino)uracil = 6,7-dimethyl-8-(1-D-ribityl)lumazine + phosphate + 2 H2O + H(+). It participates in cofactor biosynthesis; riboflavin biosynthesis; riboflavin from 2-hydroxy-3-oxobutyl phosphate and 5-amino-6-(D-ribitylamino)uracil: step 1/2. Its function is as follows. Catalyzes the formation of 6,7-dimethyl-8-ribityllumazine by condensation of 5-amino-6-(D-ribitylamino)uracil with 3,4-dihydroxy-2-butanone 4-phosphate. This is the penultimate step in the biosynthesis of riboflavin. The protein is 6,7-dimethyl-8-ribityllumazine synthase 1 of Caulobacter vibrioides (strain ATCC 19089 / CIP 103742 / CB 15) (Caulobacter crescentus).